The chain runs to 743 residues: Ovocleidin-116 (743 aa).

Residues 1 to 18 (MRATLFCLCLCLLGTVLP) form the signal peptide. A disulfide bond links C31 and C42. A glycan (N-linked (GlcNAc...) asparagine) is linked at N62. The tract at residues 68–225 (KEEGDHQGTI…GTMGTGDSAI (158 aa)) is disordered. The segment covering 129–141 (DSNSVYPTSTSVE) has biased composition (polar residues). The span at 169–179 (GPHGDGDGGNG) shows a compositional bias: gly residues. The N-linked (GlcNAc...) asparagine; partial glycan is linked to N293. 6 disordered regions span residues 333 to 356 (GDSVTSRPVGHPSVGNSGDGATEI), 385 to 454 (SGKG…GPER), 505 to 534 (ARTQPEVASAPSTVGKAAPERHRNRAQQEV), 549 to 577 (RHRARVRPESARLGQAARPEVAPAPSTGG), 628 to 649 (DPWVWGSAHPQAQHTRGSTVAG), and 692 to 743 (SGVG…RQSL). Over residues 402–420 (ATMTTRGGRGTASSGLTTG) the composition is skewed to low complexity. The span at 421 to 431 (DCSTAASTPSR) shows a compositional bias: polar residues. Positions 549 to 558 (RHRARVRPES) are enriched in basic and acidic residues.

Belongs to the osteoregulin family. Post-translationally, asn-62 is fully glycosylated, whereas only less than 10% of Asn-293 seem to be glycosylated. In the eggshell, expressed mainly in the palisade and mammillary layers. Expression also detected in the hypertrophic zone of the epiphyseal growth plate, and in cortical and medullary bone (at protein level). Highly expressed in uterus. Not detected in the proximal oviduct, liver, magnum, duodenum and kidney.

The protein localises to the secreted. It is found in the extracellular space. The protein resides in the extracellular matrix. Its function is as follows. Major component of the eggshell matrix. May play an important role in the regulation of calcite growth during eggshell calcification. May also regulate the mineralization process in developing and growing bones. The sequence is that of Ovocleidin-116 from Gallus gallus (Chicken).